The primary structure comprises 211 residues: Thiamine-phosphate synthase (211 aa).

4-amino-2-methyl-5-(diphosphooxymethyl)pyrimidine is bound by residues 36-40 (QLRDK) and Asn-68. Residues Asp-69 and Asp-88 each coordinate Mg(2+). A 4-amino-2-methyl-5-(diphosphooxymethyl)pyrimidine-binding site is contributed by Ser-107. 133 to 135 (TKS) lines the 2-[(2R,5Z)-2-carboxy-4-methylthiazol-5(2H)-ylidene]ethyl phosphate pocket. 4-amino-2-methyl-5-(diphosphooxymethyl)pyrimidine is bound at residue Lys-136. 2-[(2R,5Z)-2-carboxy-4-methylthiazol-5(2H)-ylidene]ethyl phosphate is bound by residues Gly-164 and 184-185 (IS).

The protein belongs to the thiamine-phosphate synthase family. It depends on Mg(2+) as a cofactor.

The enzyme catalyses 2-[(2R,5Z)-2-carboxy-4-methylthiazol-5(2H)-ylidene]ethyl phosphate + 4-amino-2-methyl-5-(diphosphooxymethyl)pyrimidine + 2 H(+) = thiamine phosphate + CO2 + diphosphate. The catalysed reaction is 2-(2-carboxy-4-methylthiazol-5-yl)ethyl phosphate + 4-amino-2-methyl-5-(diphosphooxymethyl)pyrimidine + 2 H(+) = thiamine phosphate + CO2 + diphosphate. It carries out the reaction 4-methyl-5-(2-phosphooxyethyl)-thiazole + 4-amino-2-methyl-5-(diphosphooxymethyl)pyrimidine + H(+) = thiamine phosphate + diphosphate. The protein operates within cofactor biosynthesis; thiamine diphosphate biosynthesis; thiamine phosphate from 4-amino-2-methyl-5-diphosphomethylpyrimidine and 4-methyl-5-(2-phosphoethyl)-thiazole: step 1/1. Its function is as follows. Condenses 4-methyl-5-(beta-hydroxyethyl)thiazole monophosphate (THZ-P) and 2-methyl-4-amino-5-hydroxymethyl pyrimidine pyrophosphate (HMP-PP) to form thiamine monophosphate (TMP). The sequence is that of Thiamine-phosphate synthase from Halalkalibacterium halodurans (strain ATCC BAA-125 / DSM 18197 / FERM 7344 / JCM 9153 / C-125) (Bacillus halodurans).